A 466-amino-acid polypeptide reads, in one-letter code: Histidinol dehydrogenase, chloroplastic (466 aa).

Residues Met-1–Cys-30 constitute a chloroplast transit peptide. NAD(+) is bound by residues Tyr-155, Gln-217, and Asn-240. Residues Ser-266, Gln-288, and His-291 each coordinate substrate. 2 residues coordinate Zn(2+): Gln-288 and His-291. Residues Glu-356 and His-357 each act as proton acceptor in the active site. Residues His-357, Asp-390, Glu-444, and His-449 each contribute to the substrate site. Asp-390 lines the Zn(2+) pocket. Zn(2+) is bound at residue His-449.

The protein belongs to the histidinol dehydrogenase family. It depends on Zn(2+) as a cofactor.

The protein localises to the plastid. The protein resides in the chloroplast. It catalyses the reaction L-histidinol + 2 NAD(+) + H2O = L-histidine + 2 NADH + 3 H(+). Its pathway is amino-acid biosynthesis; L-histidine biosynthesis; L-histidine from 5-phospho-alpha-D-ribose 1-diphosphate: step 9/9. In terms of biological role, catalyzes the sequential NAD-dependent oxidations of L-histidinol to L-histidinaldehyde and then to L-histidine. This chain is Histidinol dehydrogenase, chloroplastic (HISN8), found in Arabidopsis thaliana (Mouse-ear cress).